Reading from the N-terminus, the 3033-residue chain is Genome polyprotein (3033 aa).

An N-acetylserine; by host modification is found at S2. An interaction with STAT1 region spans residues 2 to 23; the sequence is STNPKPQRKTKRNTNRRPEDVK. An interaction with EIF2AK2/PKR region spans residues 2-58; sequence STNPKPQRKTKRNTNRRPEDVKFPGGGQIVGGVYLLPRRGPRLGVRTTRKTSERSQP. Residues 2–59 form an interaction with DDX3X region; the sequence is STNPKPQRKTKRNTNRRPEDVKFPGGGQIVGGVYLLPRRGPRLGVRTTRKTSERSQPR. The interval 2–75 is disordered; the sequence is STNPKPQRKT…PKDRRSTGKA (74 aa). Topologically, residues 2 to 168 are cytoplasmic; the sequence is STNPKPQRKT…EDGVNYATGN (167 aa). 2 consecutive short sequence motifs (nuclear localization signal) follow at residues 5–13 and 38–43; these read PKPQRKTKR and PRRGPR. Residues 7-16 show a composition bias toward basic residues; the sequence is PQRKTKRNTN. A compositionally biased stretch (low complexity) spans 32 to 47; that stretch reads GGVYLLPRRGPRLGVR. Residue S53 is modified to Phosphoserine; by host. 2 short sequence motifs (nuclear localization signal) span residues 58–64 and 66–71; these read PRGRRQP and PKDRRS. S99 is subject to Phosphoserine; by host. The segment at 112 to 152 is important for endoplasmic reticulum and mitochondrial localization; it reads PRHRSRNVGKVIDTLTCGFADLMGYIPVVGAPLSGAARAVA. The residue at position 116 (S116) is a Phosphoserine; by host PKA. Residues 122-173 are interaction with APOA2; it reads VIDTLTCGFADLMGYIPVVGAPLSGAARAVAHGVRVLEDGVNYATGNLPGFP. Residues 164–167 form an important for lipid droplets localization region; the sequence is YATG. The chain crosses the membrane as a helical span at residues 169–189; the sequence is LPGFPFSIFLLALLSCITVPV. The propeptide at 178–191 is ER anchor for the core protein, removed in mature form by host signal peptidase; sequence LLALLSCITVPVSA. Over 190–358 the chain is Lumenal; the sequence is SAAQVKNTSS…SGAHWGVMFG (169 aa). N-linked (GlcNAc...) asparagine; by host glycosylation is found at N196, N209, and N234. Residues 265–296 are important for fusion; it reads VVMSATFCSALYVGDLCGGVMLAAQVFIVSPQ. N305 is a glycosylation site (N-linked (GlcNAc...) asparagine; by host). The helical transmembrane segment at 359–379 threads the bilayer; it reads LAYFSMQGAWAKVIVILLLAA. At 380-729 the chain is on the lumenal side; it reads GVDAGTTTVG…WEWVVLLFLL (350 aa). The HVR1 stretch occupies residues 385-411; the sequence is TTTVGGAVARSTNVIAGVFSHGPQQNI. N-linked (GlcNAc...) (high mannose) asparagine; by host glycans are attached at residues N417, N423, N430, and N448. Disulfide bonds link C429/C554, C452/C459, C488/C496, and C505/C510. N477 carries N-linked (GlcNAc...) (high mannose) asparagine; by host glycosylation. Residues 484 to 496 are CD81-binding 1; sequence MRPYCWHYPPKPC. The CD81-binding 2 stretch occupies residues 524–555; the sequence is RGVPTYTWGENETDVFLLNSTRPPQGSWFGCT. N-linked (GlcNAc...) (high mannose) asparagine; by host glycans are attached at residues N534, N542, and N558. A disulfide bridge links C566 with C571. N-linked (GlcNAc...) (high mannose) asparagine; by host glycosylation occurs at N578. 3 disulfide bridges follow: C585–C589, C601–C624, and C611–C648. 2 N-linked (GlcNAc...) (high mannose) asparagine; by host glycosylation sites follow: N627 and N649. C656 and C681 form a disulfide bridge. Residues 664 to 675 are EIF2AK2/eIF2-alpha phosphorylation homology domain (PePHD); it reads SQLSPLLHSTTE. The helical transmembrane segment at 730 to 750 threads the bilayer; that stretch reads LADARVCACLWMLILLGQAEA. The Lumenal segment spans residues 751–761; the sequence is ALEKLVVLHAA. Residues 762 to 782 form a helical membrane-spanning segment; that stretch reads SAANCHGLLYFAIFFVAAWHI. Over 783-785 the chain is Cytoplasmic; it reads RGR. Residues 786–807 form a helical membrane-spanning segment; the sequence is VVPLTTYCLTGLWPFCLLLMAL. Residues 808 to 817 lie on the Lumenal side of the membrane; sequence PRQAYAYDAP. A helical membrane pass occupies residues 818–838; the sequence is VHGQIGVGLLILITLFTLTPG. At 839 to 842 the chain is on the cytoplasmic side; the sequence is YKTL. Residues 843–863 traverse the membrane as a helical segment; sequence LGQCLWWLCYLLTLGEAMIQE. Over 864–885 the chain is Lumenal; the sequence is WVPPMQVRGGRDGIAWAVTIFC. The helical transmembrane segment at 886–906 threads the bilayer; it reads PGVVFDITKWLLALLGPAYLL. The Peptidase C18 domain occupies 907–1030; the sequence is RAALTHVPYF…GYTSKGWKLL (124 aa). Residues 907–1661 lie on the Cytoplasmic side of the membrane; the sequence is RAALTHVPYF…CMQADLEVMT (755 aa). Positions 908-1210 are protease NS2-3; that stretch reads AALTHVPYFV…PVETLDVVTR (303 aa). C926 carries the S-palmitoyl cysteine; by host lipid modification. The tract at residues 933-953 is interaction with human SCPS1; sequence AGGRYVQVALLALGRWTGTYI. Catalysis depends on for protease NS2 activity; shared with dimeric partner residues H956, E976, and C997. Residues 1031-1212 form the Peptidase S29 domain; it reads APITAYAQQT…ETLDVVTRSP (182 aa). Active-site charge relay system; for serine protease NS3 activity residues include H1087 and D1111. C1127 and C1129 together coordinate Zn(2+). S1169 acts as the Charge relay system; for serine protease NS3 activity in catalysis. Positions 1175 and 1179 each coordinate Zn(2+). One can recognise a Helicase ATP-binding domain in the interval 1221 to 1373; sequence PAVPQTYQVG…PDIEEVGLGR (153 aa). ATP is bound at residue 1234–1241; the sequence is APTGSGKS. 2 residues coordinate Mg(2+): S1241 and E1321. The DECH box signature appears at 1320–1323; that stretch reads DECH. A disordered region spans residues 1481-1501; it reads VPQDAVSRSQRRGRTGRGRQG. The tract at residues 1490-1501 is RNA-binding; that stretch reads QRRGRTGRGRQG. The helical transmembrane segment at 1662–1682 threads the bilayer; the sequence is STWVLAGGVLAAVAAYCLATG. The interval 1683–1694 is NS3-binding; sequence CVSIIGRLHVNQ. The Cytoplasmic segment spans residues 1683-1809; sequence CVSIIGRLHV…ALTSPLSTST (127 aa). The chain crosses the membrane as a helical span at residues 1810–1830; that stretch reads TILLNIMGGWLASQIAPPAGA. At 1831–1832 the chain is on the lumenal side; sequence TG. A helical transmembrane segment spans residues 1833 to 1853; the sequence is FVVSGLVGAAVGSIGLGKVLV. A glycine zipper region spans residues 1837 to 1865; it reads GLVGAAVGSIGLGKVLVDILAGYGAGISG. D1854 is a topological domain (cytoplasmic). Residues 1855–1875 traverse the membrane as a helical segment; the sequence is ILAGYGAGISGALVAFKIMSG. Topologically, residues 1876–1885 are lumenal; that stretch reads EKPSMEDVIN. A helical transmembrane segment spans residues 1886–1906; sequence LLPGILSPGALVVGVICAAIL. The Cytoplasmic segment spans residues 1907–1976; the sequence is RRHVGPGEGA…WITEDCPIPC (70 aa). A lipid anchor (S-palmitoyl cysteine; by host) is attached at C1972. C1976 carries S-palmitoyl cysteine; by host; partial lipidation. An intramembrane segment occupies 1977-2007; that stretch reads SGSWLRDVWDWVCTILTDFKNWLTSKLFPKL. The interval 1982-2002 is membrane-binding; that stretch reads RDVWDWVCTILTDFKNWLTSK. Residues 2008-3012 are Cytoplasmic-facing; that stretch reads PGLPFISCQK…FHSVSRARPR (1005 aa). Positions 2009–2225 are D1; RNA-binding; that stretch reads GLPFISCQKG…RATCTTHSNT (217 aa). Residues C2015, C2033, C2035, and C2056 each contribute to the Zn(2+) site. Phosphotyrosine; by host is present on Y2069. Residues 2124 to 2212 form an FKBP8-binding region; the sequence is EFFSWVDGVQ…ASSSVSQLSA (89 aa). Positions 2124–2332 are transcriptional activation; the sequence is EFFSWVDGVQ…PTPPPRRRRT (209 aa). The segment at 2139–2143 is interaction with non-structural protein 4A; the sequence is PTPKP. The interval 2192–2213 is disordered; that stretch reads RRLARGSPPSEASSSVSQLSAP. Over residues 2196-2213 the composition is skewed to low complexity; sequence RGSPPSEASSSVSQLSAP. The residue at position 2198 (S2198) is a Phosphoserine; by host; in p56. S2201 bears the Phosphoserine; by host; in p58 mark. Phosphoserine; by host; in p56 and p58, regulates intracellular NS5A distribution is present on S2205. S2208, S2211, and S2214 each carry phosphoserine; by host; in p58. The interval 2210 to 2249 is ISDR; that stretch reads LSAPSLRATCTTHSNTYDVDMVDANLLMEGGVAQTEPESR. An interaction with EIF2AK2/PKR region spans residues 2214–2275; that stretch reads SLRATCTTHS…LEPSIPSECM (62 aa). The D2 stretch occupies residues 2227–2315; that stretch reads DVDMVDANLL…YQPPTVAGCA (89 aa). Residues 2228–2315 form a disordered region; the sequence is VDMVDANLLM…YQPPTVAGCA (88 aa). Positions 2249-2306 are NS4B-binding; that stretch reads RVPVLDFLEPMAEEESDLEPSIPSECMLPRSGFPRALPAWARPDYNPPLVESWRRPDY. The segment at 2281–2297 is interaction with human PPIA/CYPA; that stretch reads FPRALPAWARPDYNPPL. Residues 2316 to 2326 are compositionally biased toward pro residues; sequence LPPPKKAPTPP. The SH3-binding signature appears at 2322 to 2325; that stretch reads APTP. T2324 bears the Phosphothreonine; by host mark. Residues 2326 to 2334 carry the Nuclear localization signal motif; it reads PPRRRRTVG. Positions 2329–2442 are D3; that stretch reads RRRTVGLSES…SEEDDTTVCC (114 aa). Residues 2336–2447 form an interaction with host IFI27 region; that stretch reads SESTISEALQ…TTVCCSMSYS (112 aa). Residue K2350 forms a Glycyl lysine isopeptide (Lys-Gly) (interchain with G-Cter in ubiquitin) linkage. Positions 2352-2432 are disordered; sequence FGQPPSSGDA…GSGSGSWSTC (81 aa). Low complexity predominate over residues 2355–2379; sequence PPSSGDAGSSTGAGAAESGGPTSPG. The interval 2358–2381 is V3; it reads SGDAGSSTGAGAAESGGPTSPGEP. The interval 2371-2439 is interaction with host VAPB; it reads ESGGPTSPGE…STCSEEDDTT (69 aa). A compositionally biased stretch (acidic residues) spans 2398-2408; the sequence is EPGDPDLESDQ. The segment covering 2417 to 2426 has biased composition (gly residues); it reads GGGVAPGSGS. The RdRp catalytic domain maps to 2656–2774; sequence PMGFSYDTRC…ISESQGTEED (119 aa). Residues D2662, D2760, and D2761 each contribute to the Mg(2+) site. The helical transmembrane segment at 3013–3033 threads the bilayer; that stretch reads SLLFGLLLLFVGVGLFLLPAR.

This sequence belongs to the hepacivirus polyprotein family. As to quaternary structure, homooligomer. Interacts with E1 (via C-terminus). Interacts with the non-structural protein 5A. Interacts (via N-terminus) with host STAT1 (via SH2 domain); this interaction results in decreased STAT1 phosphorylation and ubiquitin-mediated proteasome-dependent STAT1 degradation, leading to decreased IFN-stimulated gene transcription. Interacts with host STAT3; this interaction constitutively activates STAT3. Interacts with host LTBR receptor. Interacts with host TNFRSF1A receptor and possibly induces apoptosis. Interacts with host HNRPK. Interacts with host YWHAE. Interacts with host UBE3A/E6AP. Interacts with host DDX3X. Interacts with host APOA2. Interacts with host RXRA protein. Interacts with host SP110 isoform 3/Sp110b; this interaction sequesters the transcriptional corepressor SP110 away from the nucleus. Interacts with host CREB3 nuclear transcription protein; this interaction triggers cell transformation. Interacts with host ACY3. Interacts with host C1QR1. Interacts with host RBM24; this interaction, which enhances the interaction of the mature core protein with 5'-UTR, may inhibit viral translation and favor replication. Interacts (via N-terminus) with host EIF2AK2/PKR (via N-terminus); this interaction induces the autophosphorylation of EIF2AK2. Part of the viral assembly initiation complex composed of NS2, E1, E2, NS3, NS4A, NS5A and the mature core protein. In terms of assembly, forms a heterodimer with envelope glycoprotein E2. Interacts with mature core protein. Interacts with protease NS2. The heterodimer E1/E2 interacts with host CLDN1; this interaction plays a role in viral entry into host cell. Interacts with host SPSB2 (via C-terminus). Part of the viral assembly initiation complex composed of NS2, E1, E2, NS3, NS4A, NS5A and the mature core protein. Forms a heterodimer with envelope glycoprotein E1. Interacts with host CD81 and SCARB1 receptors; these interactions play a role in viral entry into host cell. Interacts with host EIF2AK2/PKR; this interaction inhibits EIF2AK2 and probably allows the virus to evade the innate immune response. Interacts with host CD209/DC-SIGN and CLEC4M/DC-SIGNR. Interact with host SPCS1; this interaction is essential for viral particle assembly. Interacts with protease NS2. The heterodimer E1/E2 interacts with host CLDN1; this interaction plays a role in viral entry into host cell. Part of the viral assembly initiation complex composed of NS2, E1, E2, NS3, NS4A, NS5A and the mature core protein. Interacts with host SLC3A2/4F2hc; the interaction may facilitate viral entry into host cell. As to quaternary structure, homohexamer. Homoheptamer. Interacts with protease NS2. In terms of assembly, homodimer. Interacts with host SPCS1; this interaction is essential for viral particle assembly. Interacts with envelope glycoprotein E1. Interacts with envelope glycoprotein E2. Interacts with viroporin p7. Interacts with serine protease/helicase NS3. Part of the replication complex composed of NS2, NS3, NS4A, NS4B, NS5A and the RNA-directed RNA polymerase embedded in an ER-derived membranous web. Part of the viral assembly initiation complex composed of NS2, E1, E2, NS3, NS4A, NS5A and the mature core protein. Interacts with host NEURL3; this interaction prevents E1 binding to glycoprotein E2. Interacts with protease NS2. Interacts with non-structural protein 4A; this interaction stabilizes the folding of NS3 serine protease. NS3-NS4A interaction is essential for NS3 activation and allows membrane anchorage of the latter. NS3/NS4A complex also prevents phosphorylation of host IRF3, thus preventing the establishment of dsRNA induced antiviral state. Interacts with host MAVS; this interaction leads to the cleavage and inhibition of host MAVS. Interacts with host TICAM1; this interaction leads to the cleavage and inhibition of host TICAM1. Interacts with host TANK-binding kinase/TBK1; this interaction results in the inhibition of the association between TBK1 and IRF3, which leads to the inhibition of IRF3 activation. Interacts with host RBM24. Part of the replication complex composed of NS2, NS3, NS4A, NS4B, NS5A and the RNA-directed RNA polymerase embedded in an ER-derived membranous web. Part of the viral assembly initiation complex composed of NS2, E1, E2, NS3, NS4A, NS5A and the mature core protein. As to quaternary structure, interacts with NS3 serine protease; this interaction stabilizes the folding of NS3 serine protease. NS3-NS4A interaction is essential for NS3 activation and allows membrane anchorage of the latter. Interacts with non-structural protein 5A (via N-terminus). Part of the replication complex composed of NS2, NS3, NS4A, NS4B, NS5A and the RNA-directed RNA polymerase embedded in an ER-derived membranous web. Part of the viral assembly initiation complex composed of NS2, E1, E2, NS3, NS4A, NS5A and the mature core protein. In terms of assembly, homomultimer. Interacts with non-structural protein NS5A. Interacts with host PLA2G4C; this interaction likely initiates the recruitment of replication complexes to lipid droplets. Interacts with host STING; this interaction disrupts the interaction between STING and TBK1 thereby suppressing the interferon signaling. Part of the replication complex composed of NS2, NS3, NS4A, NS4B, NS5A and the RNA-directed RNA polymerase embedded in an ER-derived membranous web. Monomer. Homodimer; dimerization is required for RNA-binding. Interacts with the mature core protein. Interacts (via N-terminus) with non-structural protein 4A. Interacts with non-structural protein 4B. Interacts (via region D2) with RNA-directed RNA polymerase. Part of the viral assembly initiation complex composed of NS2, E1, E2, NS3, NS4A, NS5A and the mature core protein. Part of the replication complex composed of NS2, NS3, NS4A, NS4B, NS5A and the RNA-directed RNA polymerase embedded in an ER-derived membranous web. Interacts with host GRB2. Interacts with host BIN1. Interacts with host PIK3R1. Interacts with host SRCAP. Interacts with host FKBP8. Interacts (via C-terminus) with host VAPB (via MSP domain). Interacts with host EIF2AK2/PKR; this interaction leads to disruption of EIF2AK2 dimerization by NS5A and probably allows the virus to evade the innate immune response. Interacts (via N-terminus) with host PACSIN2 (via N-terminus); this interaction attenuates protein kinase C alpha-mediated phosphorylation of PACSIN2 by disrupting the interaction between PACSIN2 and PRKCA. Interacts (via N-terminus) with host SRC kinase (via SH2 domain). Interacts with most Src-family kinases. Interacts with host IFI27 and SKP2; promotes the ubiquitin-mediated proteasomal degradation of NS5A. Interacts with host GPS2. Interacts with host TNFRSF21; this interaction allows the modulation by the virus of JNK, p38 MAPK, STAT3, and Akt signaling pathways in a DR6-dependent manner. Interacts (via N-terminus) with host CIDEB (via N-terminus); this interaction seems to regulate the association of HCV particles with APOE. Interacts with host CHKA/Choline Kinase-alpha; CHKA bridges host PI4KA and NS5A and potentiates NS5A-stimulated PI4KA activity, which then facilitates the targeting of the ternary complex to the ER for viral replication. Interacts with host SPSB2 (via C-terminus); this interaction targets NS5A for ubiquitination and degradation. Interacts with host RAB18; this interaction may promote the association of NS5A and other replicase components with lipid droplets. Interacts (via region D2) with host PPIA/CYPA; the interaction stimulates RNA-binding ability of NS5A and is dependent on the peptidyl-prolyl cis-trans isomerase activity of PPIA/CYPA. Interacts with host TRIM14; this interaction induces the degradation of NS5A. As to quaternary structure, homooligomer. Interacts with non-structural protein 5A. Interacts with host VAPB. Interacts with host PRK2/PKN2. Interacts with host HNRNPA1 and SEPT6; these interactions facilitate the viral replication. Part of the replication complex composed of NS2, NS3, NS4A, NS4B, NS5A and the RNA-directed RNA polymerase embedded in an ER-derived membranous web. Requires Zn(2+) as cofactor. The cofactor is Mg(2+). In terms of processing, specific enzymatic cleavages in vivo yield mature proteins. The structural proteins, core, E1, E2 and p7 are produced by proteolytic processing by host signal peptidases. The core protein is synthesized as a 23 kDa precursor which is retained in the ER membrane through the hydrophobic signal peptide. Cleavage by the signal peptidase releases the 21 kDa mature core protein. The cleavage of the core protein precursor occurs between aminoacids 176 and 188 but the exact cleavage site is not known. Some degraded forms of the core protein appear as well during the course of infection. The other proteins (p7, NS2, NS3, NS4A, NS4B, NS5A and NS5B) are cleaved by the viral proteases. Autoprocessing between NS2 and NS3 is mediated by the NS2 cysteine protease catalytic domain and regulated by the NS3 N-terminal domain. Phosphorylated by host PKC and PKA. Post-translationally, ubiquitinated; mediated by UBE3A and leading to core protein subsequent proteasomal degradation. In terms of processing, highly N-glycosylated. Palmitoylation is required for NS2/3 autoprocessing and E2 recruitment to membranes. Post-translationally, palmitoylated. This modification may play a role in its polymerization or in protein-protein interactions. In terms of processing, cleaved by host caspases which arec probably activated by the viral infection. Ubiquitinated. Ubiquitination, most probably at Lys-2350, mediated by host IFI27 and SKP2 leads to proteasomal degradation, restricting viral infection. Post-translationally, phosphorylated on serines in a basal form termed p56. p58 is a hyperphosphorylated form of p56. p56 and p58 coexist in the cell in roughly equivalent amounts. Hyperphosphorylation is dependent on the presence of NS4A. Host CSNK1A1/CKI-alpha, PI4KA or RPS6KB1 kinases may be responsible for NS5A phosphorylation. Phosphorylated NS5A is involved in viral replication. In terms of processing, tyrosine phosphorylation is essential for the interaction with host SRC. The N-terminus is phosphorylated by host PRK2/PKN2.

The protein resides in the host endoplasmic reticulum membrane. It is found in the host mitochondrion membrane. Its subcellular location is the virion. It localises to the host cytoplasm. The protein localises to the host nucleus. The protein resides in the host lipid droplet. It is found in the virion membrane. Its subcellular location is the host mitochondrion. It localises to the host cell membrane. The protein localises to the host perinuclear region. It carries out the reaction Hydrolysis of four peptide bonds in the viral precursor polyprotein, commonly with Asp or Glu in the P6 position, Cys or Thr in P1 and Ser or Ala in P1'.. It catalyses the reaction a ribonucleoside 5'-triphosphate + H2O = a ribonucleoside 5'-diphosphate + phosphate + H(+). The enzyme catalyses ATP + H2O = ADP + phosphate + H(+). The catalysed reaction is RNA(n) + a ribonucleoside 5'-triphosphate = RNA(n+1) + diphosphate. Its activity is regulated as follows. Inhibited by the antiviral drug hexamethylene amiloride. Inhibition by amantadine appears to be genotype-dependent. Also inhibited by long-alkyl-chain iminosugar derivatives. Activity is up-regulated by PRK2/PKN2-mediated phosphorylation. Packages viral RNA to form a viral nucleocapsid, and promotes virion budding. Participates in the viral particle production as a result of its interaction with the non-structural protein 5A. Binds RNA and may function as a RNA chaperone to induce the RNA structural rearrangements taking place during virus replication. Modulates viral translation initiation by interacting with viral IRES and 40S ribosomal subunit. Affects various cell signaling pathways, host immunity and lipid metabolism. Prevents the establishment of cellular antiviral state by blocking the interferon-alpha/beta (IFN-alpha/beta) and IFN-gamma signaling pathways and by blocking the formation of phosphorylated STAT1 and promoting ubiquitin-mediated proteasome-dependent degradation of STAT1. Activates STAT3 leading to cellular transformation. Regulates the activity of cellular genes, including c-myc and c-fos. May repress the promoter of p53, and sequester CREB3 and SP110 isoform 3/Sp110b in the cytoplasm. Represses cell cycle negative regulating factor CDKN1A, thereby interrupting an important check point of normal cell cycle regulation. Targets transcription factors involved in the regulation of inflammatory responses and in the immune response: suppresses NF-kappa-B activation, and activates AP-1. Binds to dendritic cells (DCs) via C1QR1, resulting in down-regulation of T-lymphocytes proliferation. Alters lipid metabolism by interacting with hepatocellular proteins involved in lipid accumulation and storage. Induces up-regulation of FAS promoter activity, and thereby contributes to the increased triglyceride accumulation in hepatocytes (steatosis). Its function is as follows. Forms a heterodimer with envelope glycoprotein E2, which mediates virus attachment to the host cell, virion internalization through clathrin-dependent endocytosis and fusion with host membrane. Fusion with the host cell is most likely mediated by both E1 and E2, through conformational rearrangements of the heterodimer required for fusion rather than a classical class II fusion mechanism. E1/E2 heterodimer binds host apolipoproteins such as APOB and APOE thereby forming a lipo-viro-particle (LVP). APOE associated to the LVP allows the initial virus attachment to cell surface receptors such as the heparan sulfate proteoglycans (HSPGs), syndecan-1 (SDC1), syndecan-1 (SDC2), the low-density lipoprotein receptor (LDLR) and scavenger receptor class B type I (SCARB1). The cholesterol transfer activity of SCARB1 allows E2 exposure and binding of E2 to SCARB1 and the tetraspanin CD81. E1/E2 heterodimer binding on CD81 activates the epithelial growth factor receptor (EGFR) signaling pathway. Diffusion of the complex E1-E2-EGFR-SCARB1-CD81 to the cell lateral membrane allows further interaction with Claudin 1 (CLDN1) and occludin (OCLN) to finally trigger HCV entry. In terms of biological role, forms a heterodimer with envelope glycoprotein E1, which mediates virus attachment to the host cell, virion internalization through clathrin-dependent endocytosis and fusion with host membrane. Fusion with the host cell is most likely mediated by both E1 and E2, through conformational rearrangements of the heterodimer required for fusion rather than a classical class II fusion mechanism. The interaction between envelope glycoprotein E2 and host apolipoprotein E/APOE allows the proper assembly, maturation and infectivity of the viral particles. This interaction is probably promoted via the up-regulation of cellular autophagy by the virus. E1/E2 heterodimer binds host apolipoproteins such as APOB and APOE thereby forming a lipo-viro-particle (LVP). APOE associated to the LVP allows the initial virus attachment to cell surface receptors such as the heparan sulfate proteoglycans (HSPGs), syndecan-1 (SDC1), syndecan-1 (SDC2), the low-density lipoprotein receptor (LDLR) and scavenger receptor class B type I (SCARB1). The cholesterol transfer activity of SCARB1 allows E2 exposure and binding of E2 to SCARB1 and the tetraspanin CD81. E1/E2 heterodimer binding on CD81 activates the epithelial growth factor receptor (EGFR) signaling pathway. Diffusion of the complex E1-E2-EGFR-SCARB1-CD81 to the cell lateral membrane allows further interaction with Claudin 1 (CLDN1) and occludin (OCLN) to finally trigger HCV entry. Inhibits host EIF2AK2/PKR activation, preventing the establishment of an antiviral state. Viral ligand for CD209/DC-SIGN and CLEC4M/DC-SIGNR, which are respectively found on dendritic cells (DCs), and on liver sinusoidal endothelial cells and macrophage-like cells of lymph node sinuses. These interactions allow the capture of circulating HCV particles by these cells and subsequent facilitated transmission to permissive cells such as hepatocytes and lymphocyte subpopulations. The interaction between E2 and host amino acid transporter complex formed by SLC3A2 and SLC7A5/LAT1 may facilitate viral entry into host cell. Functionally, ion channel protein that acts as a viroporin and plays an essential role in the assembly, envelopment and secretion of viral particles. Regulates the host cell secretory pathway, which induces the intracellular retention of viral glycoproteins and favors assembly of viral particles. Creates a pore in acidic organelles and releases Ca(2+) and H(+) in the cytoplasm of infected cells, leading to a productive viral infection. High levels of cytoplasmic Ca(2+) may trigger membrane trafficking and transport of viral ER-associated proteins to viroplasms, sites of viral genome replication. This ionic imbalance induces the assembly of the inflammasome complex, which triggers the maturation of pro-IL-1beta into IL-1beta through the action of caspase-1. Targets also host mitochondria and induces mitochondrial depolarization. In addition of its role as a viroporin, acts as a lipid raft adhesion factor. Cysteine protease required for the proteolytic auto-cleavage between the non-structural proteins NS2 and NS3. The N-terminus of NS3 is required for the function of NS2 protease (active region NS2-3). Promotes the initiation of viral particle assembly by mediating the interaction between structural and non-structural proteins. Its function is as follows. Displays three enzymatic activities: serine protease with a chymotrypsin-like fold, NTPase and RNA helicase. NS3 serine protease, in association with NS4A, is responsible for the cleavages of NS3-NS4A, NS4A-NS4B, NS4B-NS5A and NS5A-NS5B. The NS3/NS4A complex prevents phosphorylation of host IRF3, thus preventing the establishment of dsRNA induced antiviral state. The NS3/NS4A complex induces host amino acid transporter component SLC3A2, thus contributing to HCV propagation. NS3 RNA helicase binds to RNA and unwinds both dsDNA and dsRNA in the 3' to 5' direction, and likely resolves RNA complicated stable secondary structures in the template strand. Binds a single ATP and catalyzes the unzipping of a single base pair of dsRNA. Inhibits host antiviral proteins TBK1 and IRF3 thereby preventing the establishment of an antiviral state. Cleaves host MAVS/CARDIF thereby preventing the establishment of an antiviral state. Cleaves host TICAM1/TRIF, thereby disrupting TLR3 signaling and preventing the establishment of an antiviral state. In terms of biological role, peptide cofactor which forms a non-covalent complex with the N-terminal of NS3 serine protease. The NS3/NS4A complex prevents phosphorylation of host IRF3, thus preventing the establishment of dsRNA induced antiviral state. The NS3/NS4A complex induces host amino acid transporter component SLC3A2, thus contributing to HCV propagation. Functionally, induces a specific membrane alteration that serves as a scaffold for the virus replication complex. This membrane alteration gives rise to the so-called ER-derived membranous web that contains the replication complex. NS4B self-interaction contributes to its function in membranous web formation. Promotes host TRIF protein degradation in a CASP8-dependent manner thereby inhibiting host TLR3-mediated interferon signaling. Disrupts the interaction between STING and TBK1 contributing to the inhibition of interferon signaling. Phosphorylated protein that is indispensable for viral replication and assembly. Both hypo- and hyperphosphorylated states are required for the viral life cycle. The hyperphosphorylated form of NS5A is an inhibitor of viral replication. Involved in RNA-binding and especially in binding to the viral genome. Zinc is essential for RNA-binding. Participates in the viral particle production as a result of its interaction with the viral mature core protein. Its interaction with host VAPB may target the viral replication complex to vesicles. Down-regulates viral IRES translation initiation. Mediates interferon resistance, presumably by interacting with and inhibiting host EIF2AK2/PKR. Prevents BIN1-induced apoptosis. Acts as a transcriptional activator of some host genes important for viral replication when localized in the nucleus. Via the interaction with host PACSIN2, modulates lipid droplet formation in order to promote virion assembly. Modulates TNFRSF21/DR6 signaling pathway for viral propagation. Its function is as follows. RNA-dependent RNA polymerase that performs primer-template recognition and RNA synthesis during viral replication. Initiates RNA transcription/replication at a flavin adenine dinucleotide (FAD), resulting in a 5'- FAD cap on viral RNAs. In this way, recognition of viral 5' RNA by host pattern recognition receptors can be bypassed, thereby evading activation of antiviral pathways. In Homo sapiens (Human), this protein is Genome polyprotein.